Here is a 368-residue protein sequence, read N- to C-terminus: Chaperone protein DnaJ (368 aa).

One can recognise a J domain in the interval D5–G69. The CR-type zinc-finger motif lies at G126–K208. C139, C142, C156, C159, C182, C185, C196, and C199 together coordinate Zn(2+). CXXCXGXG motif repeat units lie at residues C139–G146, C156–G163, C182–G189, and C196–G203.

It belongs to the DnaJ family. As to quaternary structure, homodimer. It depends on Zn(2+) as a cofactor.

It is found in the cytoplasm. Participates actively in the response to hyperosmotic and heat shock by preventing the aggregation of stress-denatured proteins and by disaggregating proteins, also in an autonomous, DnaK-independent fashion. Unfolded proteins bind initially to DnaJ; upon interaction with the DnaJ-bound protein, DnaK hydrolyzes its bound ATP, resulting in the formation of a stable complex. GrpE releases ADP from DnaK; ATP binding to DnaK triggers the release of the substrate protein, thus completing the reaction cycle. Several rounds of ATP-dependent interactions between DnaJ, DnaK and GrpE are required for fully efficient folding. Also involved, together with DnaK and GrpE, in the DNA replication of plasmids through activation of initiation proteins. The chain is Chaperone protein DnaJ from Exiguobacterium sp. (strain ATCC BAA-1283 / AT1b).